Here is a 409-residue protein sequence, read N- to C-terminus: Putative lipoate-protein ligase A (409 aa).

The 185-residue stretch at 146 to 330 folds into the BPL/LPL catalytic domain; sequence GPDNCRLLFY…RFQKTFKVDG (185 aa). ATP-binding positions include Arg-188, 193 to 196, and Lys-249; that span reads GTVL. Lys-249 serves as a coordination point for (R)-lipoate.

This sequence belongs to the LplA family. As to quaternary structure, monomer.

The enzyme catalyses L-lysyl-[lipoyl-carrier protein] + (R)-lipoate + ATP = N(6)-[(R)-lipoyl]-L-lysyl-[lipoyl-carrier protein] + AMP + diphosphate + H(+). It functions in the pathway protein modification; protein lipoylation via exogenous pathway; protein N(6)-(lipoyl)lysine from lipoate: step 1/2. It participates in protein modification; protein lipoylation via exogenous pathway; protein N(6)-(lipoyl)lysine from lipoate: step 2/2. Functionally, catalyzes both the ATP-dependent activation of exogenously supplied lipoate to lipoyl-AMP and the transfer of the activated lipoyl onto the lipoyl domains of lipoate-dependent enzymes. This chain is Putative lipoate-protein ligase A (AIM22), found in Saccharomyces cerevisiae (strain ATCC 204508 / S288c) (Baker's yeast).